Reading from the N-terminus, the 321-residue chain is Glucokinase (321 aa).

9 to 14 contributes to the ATP binding site; it reads ADIGGT.

The protein belongs to the bacterial glucokinase family.

The protein resides in the cytoplasm. It catalyses the reaction D-glucose + ATP = D-glucose 6-phosphate + ADP + H(+). The protein is Glucokinase of Saccharophagus degradans (strain 2-40 / ATCC 43961 / DSM 17024).